A 468-amino-acid polypeptide reads, in one-letter code: Inositol polyphosphate 5-phosphatase K (468 aa).

Residues 34–337 (VHVVTWNVAS…SDHKPVTGTF (304 aa)) form a catalytic region. Positions 318–448 (NYVSHMAYSI…HSVVGISQPF (131 aa)) are required for interaction with GPR78 and PAK1. A required for ruffle localization region spans residues 340-468 (ELNPLMSVPL…DTLYEPEPQI (129 aa)).

The protein belongs to the inositol 1,4,5-trisphosphate 5-phosphatase type II family. Interacts with GPR78; necessary for INPP5K localization at the endoplasmic reticulum. Interacts with PAK1; competes with GPR78. As to expression, expressed in the skeletal muscle and the eye.

The protein resides in the endoplasmic reticulum. Its subcellular location is the cytoplasm. It catalyses the reaction 1D-myo-inositol 1,4,5-trisphosphate + H2O = 1D-myo-inositol 1,4-bisphosphate + phosphate. The catalysed reaction is 1,2-dioctanoyl-sn-glycero-3-phospho-(1D-myo-inositol-3,4,5-trisphosphate) + H2O = 1,2-dioctanoyl-sn-glycero-3-phospho-(1D-myo-inositol-3,4-bisphosphate) + phosphate. The enzyme catalyses 1D-myo-inositol 1,3,4,5-tetrakisphosphate + H2O = 1D-myo-inositol 1,3,4-trisphosphate + phosphate. It carries out the reaction a 1,2-diacyl-sn-glycero-3-phospho-(1D-myo-inositol-4,5-bisphosphate) + H2O = a 1,2-diacyl-sn-glycero-3-phospho-(1D-myo-inositol 4-phosphate) + phosphate. It catalyses the reaction a 1,2-diacyl-sn-glycero-3-phospho-(1D-myo-inositol-3,4,5-trisphosphate) + H2O = a 1,2-diacyl-sn-glycero-3-phospho-(1D-myo-inositol-3,4-bisphosphate) + phosphate. Its function is as follows. Inositol 5-phosphatase which acts on inositol 1,4,5-trisphosphate, inositol 1,3,4,5-tetrakisphosphate, phosphatidylinositol 4,5-bisphosphate and phosphatidylinositol 3,4,5-trisphosphate. Has 6-fold higher affinity for phosphatidylinositol 4,5-bisphosphate than for inositol 1,4,5-trisphosphate. Negatively regulates assembly of the actin cytoskeleton. Controls insulin-dependent glucose uptake among inositol 3,4,5-trisphosphate phosphatases; therefore, is the specific regulator for insulin signaling in skeletal muscle. This is Inositol polyphosphate 5-phosphatase K from Mus musculus (Mouse).